The following is a 526-amino-acid chain: Bifunctional purine biosynthesis protein PurH (526 aa).

The region spanning 1–145 is the MGS-like domain; the sequence is MSKAPLALLS…KNHAHVGIVT (145 aa).

The protein belongs to the PurH family.

It catalyses the reaction (6R)-10-formyltetrahydrofolate + 5-amino-1-(5-phospho-beta-D-ribosyl)imidazole-4-carboxamide = 5-formamido-1-(5-phospho-D-ribosyl)imidazole-4-carboxamide + (6S)-5,6,7,8-tetrahydrofolate. It carries out the reaction IMP + H2O = 5-formamido-1-(5-phospho-D-ribosyl)imidazole-4-carboxamide. Its pathway is purine metabolism; IMP biosynthesis via de novo pathway; 5-formamido-1-(5-phospho-D-ribosyl)imidazole-4-carboxamide from 5-amino-1-(5-phospho-D-ribosyl)imidazole-4-carboxamide (10-formyl THF route): step 1/1. It functions in the pathway purine metabolism; IMP biosynthesis via de novo pathway; IMP from 5-formamido-1-(5-phospho-D-ribosyl)imidazole-4-carboxamide: step 1/1. In Psychrobacter arcticus (strain DSM 17307 / VKM B-2377 / 273-4), this protein is Bifunctional purine biosynthesis protein PurH.